Here is a 467-residue protein sequence, read N- to C-terminus: GTPase Obg (467 aa).

The 158-residue stretch at Met1–Leu158 folds into the Obg domain. The 175-residue stretch at Ala159–Gln333 folds into the OBG-type G domain. Residues Gly165–Ser172, Phe190–Glu194, Asp214–Gly217, Asn285–Asp288, and Ser314–Ala316 contribute to the GTP site. Ser172 and Thr192 together coordinate Mg(2+). Positions Thr352–Pro430 constitute an OCT domain.

The protein belongs to the TRAFAC class OBG-HflX-like GTPase superfamily. OBG GTPase family. In terms of assembly, monomer. The cofactor is Mg(2+).

The protein resides in the cytoplasm. An essential GTPase which binds GTP, GDP and possibly (p)ppGpp with moderate affinity, with high nucleotide exchange rates and a fairly low GTP hydrolysis rate. Plays a role in control of the cell cycle, stress response, ribosome biogenesis and in those bacteria that undergo differentiation, in morphogenesis control. This is GTPase Obg from Thermomicrobium roseum (strain ATCC 27502 / DSM 5159 / P-2).